We begin with the raw amino-acid sequence, 735 residues long: E3 ubiquitin-protein ligase SH3RF2 (735 aa).

Residues 12-53 form an RING-type zinc finger; that stretch reads CPVCFEKLDVTAKVLPCQHTFCKPCLQRIFKAHKELRCPECR. SH3 domains follow at residues 125–184 and 187–252; these read DGVP…VIKQ and QPPP…PNLS. Disordered regions lie at residues 260–301 and 335–373; these read SKGH…GSGQ and TSPS…STAM. Over residues 273-289 the composition is skewed to polar residues; that stretch reads LMSSPSRGKATNTSTLR. An interaction with PAK4 region spans residues 373-466; the sequence is MVSVPSSQQH…RHPTVCTTWA (94 aa). The 62-residue stretch at 383-444 folds into the SH3 3 domain; that stretch reads LSTNMFVALH…PSDYVIPVFS (62 aa). 3 disordered regions span residues 472–534, 612–637, and 649–735; these read VSSQ…PVQS, ETPI…KPEN, and VRFQ…FPSK. Residues 523–534 show a composition bias toward polar residues; the sequence is RKNGSLQRPVQS. Pro residues predominate over residues 617–627; it reads SEPPPKPPASA. The interaction with PPP1CA stretch occupies residues 647-652; sequence KTVRFQ. S655 carries the post-translational modification Phosphoserine. Residues 715-735 show a composition bias toward polar residues; that stretch reads FSKTTPPVSTASVSQTLFPSK.

Belongs to the SH3RF family. As to quaternary structure, interacts with FASLG and PPP1CA. Interacts with PAK4 and TNFRSF1A. Interacts with DLK1, MAP3K10, MAPK8IP1/JIP1, MAPK8IP2/JIP2 and MAPK8IP3/JIP3. Interacts with RAC1 (both active GTP- or inactive GDP-bound forms). In terms of processing, autoubiquitinated.

It localises to the nucleus. The catalysed reaction is S-ubiquitinyl-[E2 ubiquitin-conjugating enzyme]-L-cysteine + [acceptor protein]-L-lysine = [E2 ubiquitin-conjugating enzyme]-L-cysteine + N(6)-ubiquitinyl-[acceptor protein]-L-lysine.. It participates in protein modification; protein ubiquitination. In terms of biological role, has E3 ubiquitin-protein ligase activity. Acts as an anti-apoptotic regulator of the JNK pathway by ubiquitinating and promoting the degradation of SH3RF1, a scaffold protein that is required for pro-apoptotic JNK activation. Facilitates TNF-alpha-mediated recruitment of adapter proteins TRADD and RIPK1 to TNFRSF1A and regulates PAK4 protein stability via inhibition of its ubiquitin-mediated proteasomal degradation. Inhibits PPP1CA phosphatase activity. This chain is E3 ubiquitin-protein ligase SH3RF2 (Sh3rf2), found in Rattus norvegicus (Rat).